We begin with the raw amino-acid sequence, 142 residues long: Large-conductance mechanosensitive channel (142 aa).

Transmembrane regions (helical) follow at residues 14 to 34, 38 to 58, and 82 to 102; these read VMDLAVGVIIGAAFTKIVTSV, LVMPIVGAITGGGFDFSNYFL, and GSFITVLINFMILAWIIFLLV.

Belongs to the MscL family. In terms of assembly, homopentamer.

The protein resides in the cell inner membrane. Functionally, channel that opens in response to stretch forces in the membrane lipid bilayer. May participate in the regulation of osmotic pressure changes within the cell. The sequence is that of Large-conductance mechanosensitive channel from Sinorhizobium fredii (strain NBRC 101917 / NGR234).